Consider the following 419-residue polypeptide: Enolase (419 aa).

(2R)-2-phosphoglycerate is bound at residue Q161. Catalysis depends on E205, which acts as the Proton donor. Mg(2+)-binding residues include D240, E283, and D309. The (2R)-2-phosphoglycerate site is built by K334, R363, S364, and K385. The active-site Proton acceptor is the K334.

Belongs to the enolase family. The cofactor is Mg(2+).

The protein localises to the cytoplasm. It localises to the secreted. It is found in the cell surface. The enzyme catalyses (2R)-2-phosphoglycerate = phosphoenolpyruvate + H2O. It functions in the pathway carbohydrate degradation; glycolysis; pyruvate from D-glyceraldehyde 3-phosphate: step 4/5. In terms of biological role, catalyzes the reversible conversion of 2-phosphoglycerate (2-PG) into phosphoenolpyruvate (PEP). It is essential for the degradation of carbohydrates via glycolysis. In Saccharolobus islandicus (strain M.16.27) (Sulfolobus islandicus), this protein is Enolase.